A 484-amino-acid chain; its full sequence is Cathepsin F (484 aa).

The first 19 residues, 1 to 19, serve as a signal peptide directing secretion; it reads MAPWLQLLSLLGLLPGAVA. Residues 20 to 270 constitute a propeptide, activation peptide; the sequence is APAQPRAASF…MKQAKSVGDL (251 aa). Asparagine 160 and asparagine 195 each carry an N-linked (GlcNAc...) asparagine glycan. 2 disulfide bridges follow: cysteine 292–cysteine 333 and cysteine 326–cysteine 366. Residue cysteine 295 is part of the active site. 2 N-linked (GlcNAc...) asparagine glycosylation sites follow: asparagine 367 and asparagine 378. Cysteine 424 and cysteine 472 are oxidised to a cystine. Histidine 431 is an active-site residue. The N-linked (GlcNAc...) asparagine glycan is linked to asparagine 440. Asparagine 451 is an active-site residue.

It belongs to the peptidase C1 family. High expression levels in heart, skeletal muscle, brain, testis and ovary; moderate levels in prostate, placenta, liver and colon; and no detectable expression in peripheral leukocytes and thymus.

The protein localises to the lysosome. The enzyme catalyses The recombinant enzyme cleaves synthetic substrates with Phe and Leu (better than Val) in P2, with high specificity constant (kcat/Km) comparable to that of cathepsin L.. Thiol protease which is believed to participate in intracellular degradation and turnover of proteins. Has also been implicated in tumor invasion and metastasis. The polypeptide is Cathepsin F (CTSF) (Homo sapiens (Human)).